The following is a 780-amino-acid chain: ATP-dependent 6-phosphofructokinase, muscle type (780 aa).

Residue Thr2 is modified to N-acetylthreonine. The segment at 2-390 is N-terminal catalytic PFK domain 1; the sequence is THEEHHAAKT…NWEVYKLLAH (389 aa). ATP is bound by residues Gly25, 88–89, and 118–121; these read RC and GDGS. Asp119 provides a ligand contact to Mg(2+). Ser133 is modified (phosphoserine). Substrate contacts are provided by residues 164-166, Arg201, 208-210, Glu264, Arg292, and 298-301; these read SID, MGR, and HVQR. The active-site Proton acceptor is Asp166. Position 377 is a phosphoserine (Ser377). The interdomain linker stretch occupies residues 391–401; it reads VRPPVSKSGSH. The C-terminal regulatory PFK domain 2 stretch occupies residues 402–780; it reads TVAVMNVGAP…TRKRSGEGAV (379 aa). Residues Arg471 and 528–532 contribute to the beta-D-fructose 2,6-bisphosphate site; that span reads TVSNN. O-linked (GlcNAc) serine glycosylation is present at Ser530. An N6-(2-hydroxyisobutyryl)lysine modification is found at Lys557. Residues Arg566, 573–575, Glu629, Arg655, and 661–664 contribute to the beta-D-fructose 2,6-bisphosphate site; these read MGG and HMQQ. Ser667 is modified (phosphoserine). Beta-D-fructose 2,6-bisphosphate is bound at residue Arg735. Residue Ser775 is modified to Phosphoserine.

The protein belongs to the phosphofructokinase type A (PFKA) family. ATP-dependent PFK group I subfamily. Eukaryotic two domain clade 'E' sub-subfamily. In terms of assembly, homo- and heterotetramers. Phosphofructokinase (PFK) enzyme functions as a tetramer composed of different combinations of 3 types of subunits, called PFKM (M), PFKL (L) and PFKP (P). The composition of the PFK tetramer differs according to the tissue type it is present in. The kinetic and regulatory properties of the tetrameric enzyme are dependent on the subunit composition, hence can vary across tissues. Interacts (via C-terminus) with HK1 (via N-terminal spermatogenic cell-specific region). It depends on Mg(2+) as a cofactor. GlcNAcylation decreases enzyme activity.

It is found in the cytoplasm. The enzyme catalyses beta-D-fructose 6-phosphate + ATP = beta-D-fructose 1,6-bisphosphate + ADP + H(+). The protein operates within carbohydrate degradation; glycolysis; D-glyceraldehyde 3-phosphate and glycerone phosphate from D-glucose: step 3/4. With respect to regulation, allosterically activated by ADP, AMP, or fructose 2,6-bisphosphate, and allosterically inhibited by ATP or citrate. Its function is as follows. Catalyzes the phosphorylation of D-fructose 6-phosphate to fructose 1,6-bisphosphate by ATP, the first committing step of glycolysis. This is ATP-dependent 6-phosphofructokinase, muscle type (PFKM) from Macaca fascicularis (Crab-eating macaque).